We begin with the raw amino-acid sequence, 375 residues long: Palmitoyltransferase PFA4 (375 aa).

Residues Met1–Trp9 are Cytoplasmic-facing. A helical transmembrane segment spans residues Leu10–Val30. The Lumenal portion of the chain corresponds to Leu31 to Asn33. A helical membrane pass occupies residues Phe34–Tyr54. At Trp55–Pro121 the chain is on the cytoplasmic side. The 51-residue stretch at Asn78–Phe128 folds into the DHHC domain. Cys108 functions as the S-palmitoyl cysteine intermediate in the catalytic mechanism. The helical transmembrane segment at His122 to Val142 threads the bilayer. Topologically, residues Lys143–Leu164 are lumenal. A helical membrane pass occupies residues Ile165–Phe185. Topologically, residues Val186–Glu375 are cytoplasmic.

Belongs to the DHHC palmitoyltransferase family. PFA4 subfamily.

The protein resides in the endoplasmic reticulum membrane. The enzyme catalyses L-cysteinyl-[protein] + hexadecanoyl-CoA = S-hexadecanoyl-L-cysteinyl-[protein] + CoA. Its function is as follows. Mediates the reversible addition of palmitate to target proteins, thereby regulating their membrane association and biological function. The chain is Palmitoyltransferase PFA4 from Eremothecium gossypii (strain ATCC 10895 / CBS 109.51 / FGSC 9923 / NRRL Y-1056) (Yeast).